A 433-amino-acid chain; its full sequence is Putative wall-associated receptor kinase-like 16 (433 aa).

The N-terminal stretch at 1 to 22 (MKLQHVVYLVAIFFVVAIFVIA) is a signal peptide. At 23–29 (CIEENKY) the chain is on the extracellular side. A helical transmembrane segment spans residues 30–50 (LVWIMIILANTTNILSLVRSI). Topologically, residues 51-433 (SYIKNIRKHQ…VARFDIEAGR (383 aa)) are cytoplasmic. At threonine 97 the chain carries Phosphothreonine. Residues 108–391 (YDVSRILGQG…RAKTTKHNWL (284 aa)) form the Protein kinase domain. ATP is bound by residues 114-122 (LGQGGQWTV) and lysine 136. At tyrosine 181 the chain carries Phosphotyrosine. Aspartate 233 serves as the catalytic Proton acceptor. A phosphothreonine mark is found at threonine 267 and threonine 272. Residue tyrosine 280 is modified to Phosphotyrosine.

This sequence belongs to the protein kinase superfamily. Ser/Thr protein kinase family.

The protein localises to the membrane. It catalyses the reaction L-seryl-[protein] + ATP = O-phospho-L-seryl-[protein] + ADP + H(+). The catalysed reaction is L-threonyl-[protein] + ATP = O-phospho-L-threonyl-[protein] + ADP + H(+). Putative serine/threonine-protein kinase that may function as a signaling receptor of extracellular matrix component. The sequence is that of Putative wall-associated receptor kinase-like 16 (WAKL16) from Arabidopsis thaliana (Mouse-ear cress).